Consider the following 442-residue polypeptide: Chaperone protein dnaJ A6, chloroplastic (442 aa).

A chloroplast-targeting transit peptide spans 1-82 (MAIIQLGSTC…PRRGSRFTVR (82 aa)). The J domain maps to 86 to 150 (DYYSVLGVSK…EKKSLYDRYG (65 aa)). The segment at 211-292 (GMEKEIEISR…CSGDGRVRKT (82 aa)) adopts a CR-type zinc-finger fold. C224, C227, C241, C244, C267, C270, C280, and C283 together coordinate Zn(2+). 4 CXXCXGXG motif repeats span residues 224–231 (CGTCEGSG), 241–248 (CTTCGGQG), 267–274 (CSSCNGTG), and 280–287 (CGTCSGDG).

It belongs to the DnaJ family.

It is found in the plastid. The protein localises to the chloroplast. Functionally, may function together with HSC70 chaperone to assist protein folding and prevent protein aggregation during heat stress in the chloroplast. In Arabidopsis thaliana (Mouse-ear cress), this protein is Chaperone protein dnaJ A6, chloroplastic.